Consider the following 282-residue polypeptide: Deoxyribonuclease-1 (282 aa).

A signal peptide spans 1 to 22; it reads MRGMKLLGALLALAALLQGAVS. Asn-40 carries N-linked (GlcNAc...) asparagine glycosylation. The active site involves Glu-100. A disulfide bond links Cys-123 and Cys-126. N-linked (GlcNAc...) asparagine glycosylation is present at Asn-128. Residue His-156 is part of the active site. An intrachain disulfide couples Cys-195 to Cys-231.

The protein belongs to the DNase I family. The cofactor is Ca(2+). Mg(2+) is required as a cofactor. As to expression, principally in tissues of the digestive system. Highest levels found in urine, but also relatively abundant in semen and saliva.

The protein resides in the secreted. The protein localises to the zymogen granule. It is found in the nucleus envelope. The enzyme catalyses Endonucleolytic cleavage to 5'-phosphodinucleotide and 5'-phosphooligonucleotide end-products.. In terms of biological role, serum endocuclease secreted into body fluids by a wide variety of exocrine and endocrine organs. Expressed by non-hematopoietic tissues and preferentially cleaves protein-free DNA. Among other functions, seems to be involved in cell death by apoptosis. Binds specifically to G-actin and blocks actin polymerization. Together with DNASE1L3, plays a key role in degrading neutrophil extracellular traps (NETs). NETs are mainly composed of DNA fibers and are released by neutrophils to bind pathogens during inflammation. Degradation of intravascular NETs by DNASE1 and DNASE1L3 is required to prevent formation of clots that obstruct blood vessels and cause organ damage following inflammation. The chain is Deoxyribonuclease-1 from Homo sapiens (Human).